The chain runs to 171 residues: MNIDDTFILLGVIYAAHGVRGCVKIKTFTHDPSDIAAYGPLTDGSESLKVSVMSVIKNGCVIAKISGIDDRCSAEALKNKKLYVSSSCLPKLKNDEFYKDELIGLSVKLPDDTIFGIVTEVFNFGSGDIVEISTPQGKKEMFSFTSNIFPSIDMKTREMTIVPPEIVGVYK.

One can recognise a PRC barrel domain in the interval 94 to 168 (NDEFYKDELI…MTIVPPEIVG (75 aa)).

The protein belongs to the RimM family. As to quaternary structure, binds ribosomal protein uS19.

It localises to the cytoplasm. In terms of biological role, an accessory protein needed during the final step in the assembly of 30S ribosomal subunit, possibly for assembly of the head region. Essential for efficient processing of 16S rRNA. May be needed both before and after RbfA during the maturation of 16S rRNA. It has affinity for free ribosomal 30S subunits but not for 70S ribosomes. In Anaplasma phagocytophilum (strain HZ), this protein is Ribosome maturation factor RimM.